Consider the following 536-residue polypeptide: Beta-hexosaminidase subunit beta (536 aa).

An N-terminal signal peptide occupies residues 1-31 (MPQSPRSAPGLLLLQALVSLVSLALVAPARL). Asn63 is a glycosylation site (N-linked (GlcNAc...) asparagine). Cys70 and Cys116 are disulfide-bonded. N-linked (GlcNAc...) asparagine glycans are attached at residues Asn169 and Asn306. 2 disulfides stabilise this stretch: Cys288/Cys339 and Cys513/Cys530. Glu334 (proton donor) is an active-site residue.

Belongs to the glycosyl hydrolase 20 family. In terms of assembly, there are 3 forms of beta-hexosaminidase: hexosaminidase A is a heterodimer composed of one subunit alpha and one subunit beta (chain A and B); hexosaminidase B is a homodimer of two beta subunits (two chains A and B); hexosaminidase S is a homodimer of two alpha subunits. The composition of the dimer (isozyme A versus isozyme S) has a significant effect on the substrate specificity of the alpha subunit active site.

Its subcellular location is the lysosome. It localises to the cytoplasmic vesicle. It is found in the secretory vesicle. The protein localises to the cortical granule. It carries out the reaction Hydrolysis of terminal non-reducing N-acetyl-D-hexosamine residues in N-acetyl-beta-D-hexosaminides.. The catalysed reaction is N-acetyl-beta-D-galactosaminyl-(1-&gt;4)-beta-D-3-sulfogalactosyl-(1-&gt;4)-beta-D-glucosyl-(1&lt;-&gt;1')-ceramide + H2O = a beta-D-3-sulfogalactosyl-(1-&gt;4)-beta-D-glucosyl-(1&lt;-&gt;1')-ceramide + N-acetyl-beta-D-galactosamine. The enzyme catalyses a ganglioside GM2 (d18:1(4E)) + H2O = a ganglioside GM3 (d18:1(4E)) + N-acetyl-beta-D-galactosamine. It catalyses the reaction a ganglioside GM2 + H2O = a ganglioside GM3 + N-acetyl-beta-D-galactosamine. It carries out the reaction beta-D-GalNAc-(1-&gt;4)-alpha-L-IdoA-(1-&gt;3)-beta-D-GalNAc-4-sulfate-(1-&gt;4)-alpha-L-IdoA-(1-&gt;3)-D-GalNAc-4-sulfate + H2O = alpha-L-IdoA-(1-&gt;3)-beta-D-GalNAc-4-sulfate-(1-&gt;4)-alpha-L-IdoA-(1-&gt;3)-D-GalNAc-4-sulfate + N-acetyl-D-galactosamine. The catalysed reaction is N-acetyl-beta-D-6-sulfogalactosaminyl-(1-&gt;4)-alpha-L-iduronyl-(1-&gt;3)-N-acetyl-D-6-sulfogalactosamine + H2O = alpha-L-iduronyl-(1-&gt;3)-N-acetyl-D-6-sulfogalactosamine + N-acetyl-D-6-sulfogalactosamine. With respect to regulation, addition of GM2A stimulates the hydrolysis of sulfated glycosphingolipid SM2 and the ganglioside GM2. In terms of biological role, hydrolyzes the non-reducing end N-acetyl-D-hexosamine and/or sulfated N-acetyl-D-hexosamine of glycoconjugates, such as the oligosaccharide moieties from proteins and neutral glycolipids, or from certain mucopolysaccharides. The isozyme B does not hydrolyze each of these substrates, however hydrolyzes efficiently neutral oligosaccharide. Only the isozyme A is responsible for the degradation of GM2 gangliosides in the presence of GM2A. During fertilization is responsible, at least in part, for the zona block to polyspermy. Present in the cortical granules of non-activated oocytes, is exocytosed during the cortical reaction in response to oocyte activation and inactivates the sperm galactosyltransferase-binding site, accounting for the block in sperm binding to the zona pellucida. The protein is Beta-hexosaminidase subunit beta of Mus musculus (Mouse).